The sequence spans 289 residues: Acetyl-coenzyme A carboxylase carboxyl transferase subunit beta (289 aa).

The CoA carboxyltransferase N-terminal domain maps to 28–289 (VMTKCPKCKK…QGGEMAVWQS (262 aa)). Zn(2+) contacts are provided by Cys32, Cys35, Cys51, and Cys54. The C4-type zinc finger occupies 32–54 (CPKCKKIMYTKEVLKNLKVCVNC).

Belongs to the AccD/PCCB family. Acetyl-CoA carboxylase is a heterohexamer composed of biotin carboxyl carrier protein (AccB), biotin carboxylase (AccC) and two subunits each of ACCase subunit alpha (AccA) and ACCase subunit beta (AccD). The cofactor is Zn(2+).

The protein localises to the cytoplasm. The catalysed reaction is N(6)-carboxybiotinyl-L-lysyl-[protein] + acetyl-CoA = N(6)-biotinyl-L-lysyl-[protein] + malonyl-CoA. The protein operates within lipid metabolism; malonyl-CoA biosynthesis; malonyl-CoA from acetyl-CoA: step 1/1. In terms of biological role, component of the acetyl coenzyme A carboxylase (ACC) complex. Biotin carboxylase (BC) catalyzes the carboxylation of biotin on its carrier protein (BCCP) and then the CO(2) group is transferred by the transcarboxylase to acetyl-CoA to form malonyl-CoA. This Bacillus thuringiensis (strain Al Hakam) protein is Acetyl-coenzyme A carboxylase carboxyl transferase subunit beta.